The sequence spans 986 residues: Ephrin type-A receptor 4 (986 aa).

The first 19 residues, 1–19 (MAGVPVGALLPLLVGVCGA), serve as a signal peptide directing secretion. At 20–547 (VTGSRVYPAN…PIIGDGTNPT (528 aa)) the chain is on the extracellular side. One can recognise an Eph LBD domain in the interval 30–209 (EVTLLDSRSV…FYKKCPLTVR (180 aa)). N-linked (GlcNAc...) asparagine glycans are attached at residues Asn-235, Asn-340, and Asn-408. Fibronectin type-III domains follow at residues 328 to 439 (PPSA…TNQA) and 440 to 537 (APSP…TVPS). Residues 548 to 569 (VLLVSVAGSVVLVVILIAAFVI) form a helical membrane-spanning segment. Residues 570-986 (SRRRSKYSKA…QQMHGRMVPV (417 aa)) are Cytoplasmic-facing. Tyr-596 and Tyr-602 each carry phosphotyrosine; by autocatalysis. Positions 621–882 (IKIEKVIGVG…QIVNMLDKLI (262 aa)) constitute a Protein kinase domain. ATP is bound by residues 627–635 (IGVGEFGEV) and Lys-653. Asp-746 functions as the Proton acceptor in the catalytic mechanism. Tyr-779 and Tyr-928 each carry phosphotyrosine; by autocatalysis. Residues 911–975 (SAVVSVSDWL…LSSVQAMRSQ (65 aa)) enclose the SAM domain. The PDZ-binding motif lies at 984-986 (VPV).

It belongs to the protein kinase superfamily. Tyr protein kinase family. Ephrin receptor subfamily. Interacts with the src family kinase, p59-Fyn, through the major phosphorylation site at position Tyr-602. Interacts (via PDZ motif) with SIPA1L1 (via PDZ domain); controls neuronal morphology through regulation of the RAP1 (RAP1A or RAP1B) and RAP2 (RAP2A, RAP2B or RAP2C) GTPases. Expressed at high levels in brain, with expression also detected in the kidney, lung, muscle and thymus.

It localises to the cell membrane. It is found in the early endosome. It catalyses the reaction L-tyrosyl-[protein] + ATP = O-phospho-L-tyrosyl-[protein] + ADP + H(+). In terms of biological role, receptor tyrosine kinase which binds membrane-bound ephrin family ligands residing on adjacent cells, leading to contact-dependent bidirectional signaling into neighboring cells. The signaling pathway downstream of the receptor is referred to as forward signaling while the signaling pathway downstream of the ephrin ligand is referred to as reverse signaling. Highly promiscuous, it has the unique property among Eph receptors to bind and to be physiologically activated by both GPI-anchored ephrin-A and transmembrane ephrin-B ligands including EFNA1 and EFNB3. Upon activation by ephrin ligands, modulates cell morphology and integrin-dependent cell adhesion through regulation of the Rac, Rap and Rho GTPases activity. Plays an important role in the development of the nervous system controlling different steps of axonal guidance including the establishment of the corticospinal projections. The polypeptide is Ephrin type-A receptor 4 (EPHA4) (Gallus gallus (Chicken)).